The chain runs to 673 residues: Poly(glycerol-phosphate) alpha-glucosyltransferase (673 aa).

Phosphoserine is present on S2.

It belongs to the glycosyltransferase group 1 family. Glycosyltransferase 4 subfamily.

It is found in the cytoplasm. The enzyme catalyses 4-O-{[(2R)-1-glycerylphospho](n)-(2R)-1-glycerylphospho}-N-acetyl-beta-D-mannosaminyl-(1-&gt;4)-N-acetyl-alpha-D-glucosaminyl undecaprenyl diphosphate + n UDP-alpha-D-glucose = 4-O-{[(2R)-2-alpha-D-glucosyl-1-glycerylphospho](n)-(2R)-1-glycerylphospho}-N-acetyl-beta-D-mannosaminyl-(1-&gt;4)-N-acetyl-alpha-D-glucosaminyl undecaprenyl diphosphate + n UDP + n H(+). Its pathway is cell wall biogenesis; poly(glycerol phosphate) teichoic acid biosynthesis. In terms of biological role, catalyzes the addition of glucose to the C-2 hydroxy group of the glycerol units in teichoic acid. This is Poly(glycerol-phosphate) alpha-glucosyltransferase (tagE) from Bacillus subtilis (strain 168).